Consider the following 358-residue polypeptide: UPF0421 protein BT9727_2513 (358 aa).

4 helical membrane-spanning segments follow: residues 19-39, 74-94, 109-129, and 131-151; these read IAVF…IFAV, FTFF…FTIV, TLTA…AFLI, and LATT…ILPP.

The protein belongs to the UPF0421 family.

The protein resides in the cell membrane. This Bacillus thuringiensis subsp. konkukian (strain 97-27) protein is UPF0421 protein BT9727_2513.